Consider the following 344-residue polypeptide: tRNA (guanine(26)-N(2))-dimethyltransferase (344 aa).

A Trm1 methyltransferase domain is found at Met-1–Met-334. S-adenosyl-L-methionine-binding residues include Arg-35, Arg-60, and Glu-76.

This sequence belongs to the class I-like SAM-binding methyltransferase superfamily. Trm1 family.

It catalyses the reaction guanosine(26) in tRNA + 2 S-adenosyl-L-methionine = N(2)-dimethylguanosine(26) in tRNA + 2 S-adenosyl-L-homocysteine + 2 H(+). Its function is as follows. Dimethylates a single guanine residue at position 26 of a number of tRNAs using S-adenosyl-L-methionine as donor of the methyl groups. This chain is tRNA (guanine(26)-N(2))-dimethyltransferase, found in Thermoplasma acidophilum (strain ATCC 25905 / DSM 1728 / JCM 9062 / NBRC 15155 / AMRC-C165).